Reading from the N-terminus, the 78-residue chain is Large ribosomal subunit protein bL28 (78 aa).

Belongs to the bacterial ribosomal protein bL28 family.

The chain is Large ribosomal subunit protein bL28 from Flavobacterium psychrophilum (strain ATCC 49511 / DSM 21280 / CIP 103535 / JIP02/86).